Here is a 203-residue protein sequence, read N- to C-terminus: Endo-type membrane-bound lytic murein transglycosylase A (203 aa).

A signal peptide spans 1–15 (MKLRWFAFLIVLLAG). Cys-16 carries N-palmitoyl cysteine lipidation. Cys-16 carries the S-diacylglycerol cysteine lipid modification.

It belongs to the transglycosylase Slt family.

It localises to the cell outer membrane. The enzyme catalyses Endolytic cleavage of the (1-&gt;4)-beta-glycosidic linkage between N-acetylmuramic acid (MurNAc) and N-acetylglucosamine (GlcNAc) residues in peptidoglycan with concomitant formation of a 1,6-anhydrobond in the MurNAc residue.. Functionally, murein-degrading enzyme. May play a role in recycling of muropeptides during cell elongation and/or cell division. Preferentially cleaves at a distance of more than two disaccharide units from the ends of the glycan chain. This Escherichia coli O1:K1 / APEC protein is Endo-type membrane-bound lytic murein transglycosylase A.